We begin with the raw amino-acid sequence, 254 residues long: Alcohol dehydrogenase (254 aa).

10–33 contacts NAD(+); that stretch reads FVAGLGGIGLDTSREIVKSGPKNL. S138 lines the substrate pocket. Catalysis depends on Y151, which acts as the Proton acceptor.

This sequence belongs to the short-chain dehydrogenases/reductases (SDR) family. As to quaternary structure, homodimer.

The enzyme catalyses a primary alcohol + NAD(+) = an aldehyde + NADH + H(+). It catalyses the reaction a secondary alcohol + NAD(+) = a ketone + NADH + H(+). The protein is Alcohol dehydrogenase (Adh) of Drosophila planitibia (Fruit fly).